The following is a 544-amino-acid chain: Elongator complex protein 3 (544 aa).

The Radical SAM core domain maps to 79-369 (RTASGIAVVA…YRIQRDIPMP (291 aa)). [4Fe-4S] cluster-binding residues include cysteine 96, cysteine 106, and cysteine 109. Acetyl-CoA contacts are provided by residues lysine 161, 472–475 (ELHV), 495–497 (FGT), and tyrosine 528. An N-acetyltransferase domain is found at 393–544 (TKCRDIRARE…LDGPYMSKWL (152 aa)).

Belongs to the ELP3 family. In terms of assembly, component of the elongator complex. [4Fe-4S] cluster is required as a cofactor.

The protein resides in the cytoplasm. The catalysed reaction is uridine(34) in tRNA + acetyl-CoA + S-adenosyl-L-methionine + H2O = 5-(carboxymethyl)uridine(34) in tRNA + 5'-deoxyadenosine + L-methionine + CoA + 2 H(+). It participates in tRNA modification; 5-methoxycarbonylmethyl-2-thiouridine-tRNA biosynthesis. Functionally, catalytic tRNA acetyltransferase subunit of the elongator complex which is required for multiple tRNA modifications, including mcm5U (5-methoxycarbonylmethyl uridine), mcm5s2U (5-methoxycarbonylmethyl-2-thiouridine), and ncm5U (5-carbamoylmethyl uridine). In the elongator complex, acts as a tRNA uridine(34) acetyltransferase, which mediates formation of carboxymethyluridine in the wobble base at position 34 in tRNAs. The protein is Elongator complex protein 3 of Schizosaccharomyces pombe (strain 972 / ATCC 24843) (Fission yeast).